A 1101-amino-acid chain; its full sequence is Isoleucine--tRNA ligase (1101 aa).

Positions 50-60 match the 'HIGH' region motif; the sequence is PFANGLPHYGH. The 'KMSKS' region motif lies at 629–633; sequence KLSKR. ATP is bound at residue K632.

Belongs to the class-I aminoacyl-tRNA synthetase family. IleS type 2 subfamily. Monomer. It depends on Zn(2+) as a cofactor.

The protein localises to the cytoplasm. The catalysed reaction is tRNA(Ile) + L-isoleucine + ATP = L-isoleucyl-tRNA(Ile) + AMP + diphosphate. In terms of biological role, catalyzes the attachment of isoleucine to tRNA(Ile). As IleRS can inadvertently accommodate and process structurally similar amino acids such as valine, to avoid such errors it has two additional distinct tRNA(Ile)-dependent editing activities. One activity is designated as 'pretransfer' editing and involves the hydrolysis of activated Val-AMP. The other activity is designated 'posttransfer' editing and involves deacylation of mischarged Val-tRNA(Ile). This is Isoleucine--tRNA ligase from Anaplasma marginale (strain St. Maries).